The following is a 2773-amino-acid chain: Peramine synthetase A (2773 aa).

The tract at residues 246-644 is adenylation 1; that stretch reads FEDQVYSQPL…GRKDAQVKIR (399 aa). The Carrier 1 domain occupies 774–850; it reads QPTCEMEERM…DLAKNCSQTL (77 aa). Position 811 is an O-(pantetheine 4'-phosphoryl)serine (Ser-811). The condensation stretch occupies residues 888 to 1301; the sequence is QDAYPCTRLQ…MSSAEDLEQI (414 aa). The tract at residues 1321–1720 is adenylation 2; the sequence is ADQVQARPDS…GRKDTQVKVR (400 aa). The tract at residues 1810–1949 is methylation (Met) domain; it reads IGRDFVGWSS…IIQHLASLGS (140 aa). The interval 2250 to 2271 is disordered; that stretch reads MLSESLQQKAPPTARKRLPSTA. One can recognise a Carrier 2 domain in the interval 2267 to 2345; it reads LPSTAPERAM…HLLQTAAAGV (79 aa). Ser-2304 bears the O-(pantetheine 4'-phosphoryl)serine mark. The tract at residues 2397 to 2715 is thiesterase (TE) domain; it reads TVVLTGANGF…LQDLADTARS (319 aa).

Belongs to the NRP synthetase family. Pantetheine 4'-phosphate is required as a cofactor.

It carries out the reaction (S)-1-pyrroline-5-carboxylate + L-arginine + S-adenosyl-L-methionine + 2 ATP = peramine + 2 AMP + S-adenosyl-L-homocysteine + 2 diphosphate + H2O + 2 H(+). In terms of biological role, nonribosomal peptide synthetase involved in the biosynthesis of peramine, a pyrrolopyrazine synthesized in association with the grass host that protects the plant from insect herbivory. The single multifunctional NRPS perA seems to be responsible for all catalytic steps in the biosynthesis of peramine. The condensation domain of perA is proposed to catalyze formation of a peptide bond between 1-pyrroline-5-carboxylate and arginine. The methylation domain of perA would catalyze the N-methylation of the alpha-amino group of arginine. The reductase domain is proposed to be responsible for reduction of the thioester and the cyclization to form an iminium ion resulting in release from the peptide synthetase. Deprotonation of this intermediate and oxidation of the pyrroline ring would give rise to peramine. This final oxidation to give the pyrrole functionality may be spontaneous. The chain is Peramine synthetase A from Epichloe festucae (strain Fl1).